Consider the following 299-residue polypeptide: SET domain-containing protein 9 (299 aa).

Residues 122–295 (FSVAQATSSL…QGEELFSNYY (174 aa)) form the SET domain. Residue Tyr-294 coordinates S-adenosyl-L-methionine.

Belongs to the class V-like SAM-binding methyltransferase superfamily.

The sequence is that of SET domain-containing protein 9 (SETD9) from Homo sapiens (Human).